The sequence spans 992 residues: Exportin-T (992 aa).

This sequence belongs to the exportin family.

The protein localises to the nucleus. The protein resides in the cytoplasm. TRNA nucleus export receptor which facilitates tRNA translocation across the nuclear pore complex. Involved in pre-tRNA splicing, probably by affecting the interaction of pre-tRNA with splicing endonuclease. This is Exportin-T (LOS1) from Scheffersomyces stipitis (strain ATCC 58785 / CBS 6054 / NBRC 10063 / NRRL Y-11545) (Yeast).